The sequence spans 120 residues: Superoxide dismutase [Cu-Zn] (120 aa).

Cu cation-binding residues include histidine 11, histidine 13, and histidine 28. A disordered region spans residues 16 to 52 (GDTTNGCMSTGPHFNPTGKEHGAPQDENRHAGDLGNI). A disulfide bridge links cysteine 22 with cysteine 112. Positions 28, 36, 45, and 48 each coordinate Zn(2+). The span at 33–47 (GKEHGAPQDENRHAG) shows a compositional bias: basic and acidic residues. Histidine 85 is a Cu cation binding site.

It belongs to the Cu-Zn superoxide dismutase family. As to quaternary structure, homodimer. The cofactor is Cu cation. Zn(2+) is required as a cofactor.

It is found in the cytoplasm. The catalysed reaction is 2 superoxide + 2 H(+) = H2O2 + O2. Its function is as follows. Destroys radicals which are normally produced within the cells and which are toxic to biological systems. The chain is Superoxide dismutase [Cu-Zn] (sodC) from Aspergillus japonicus.